Consider the following 537-residue polypeptide: Putative cysteine ligase BshC (537 aa).

The stretch at 422–450 forms a coiled coil; that stretch reads IEKVEGMIEQQRRLYQDLLDEVAGNQNNI.

The protein belongs to the BshC family.

Involved in bacillithiol (BSH) biosynthesis. May catalyze the last step of the pathway, the addition of cysteine to glucosamine malate (GlcN-Mal) to generate BSH. This Staphylococcus aureus (strain MRSA252) protein is Putative cysteine ligase BshC.